A 294-amino-acid polypeptide reads, in one-letter code: Sperm acrosome membrane-associated protein 1 (294 aa).

Positions 1 to 29 (MSPRGTGCSAGLLMTVGWLLLAGLQSARG) are cleaved as a signal peptide. Residues 30–221 (TNVTAAVQDA…LPATDAALIF (192 aa)) lie on the Extracellular side of the membrane. A glycan (N-linked (GlcNAc...) asparagine) is linked at asparagine 31. Residues 42–70 (AHEGEGEEETENNDSETAENYAPPETEDV) are disordered. Acidic residues predominate over residues 46 to 58 (EGEEETENNDSET). Residues 222–242 (VLTIGVIICVFIIFLLIFIII) form a helical membrane-spanning segment. The Cytoplasmic segment spans residues 243–294 (NWAAVKAFWGAKASTPEVQSEQSSVRYKDSTSLDQLPTEMPGEDDALSEWNE). Serine 256 is subject to Phosphoserine. A compositionally biased stretch (polar residues) spans 258-267 (PEVQSEQSSV). Residues 258-294 (PEVQSEQSSVRYKDSTSLDQLPTEMPGEDDALSEWNE) are disordered. Tyrosine 269 carries the phosphotyrosine modification. Residues 283-294 (PGEDDALSEWNE) are compositionally biased toward acidic residues. Serine 290 is modified (phosphoserine).

Interacts with CYLC1; the interaction may be relevant for proper acrosome attachment to the nuclear envelope. N-glycosylated. Testis specific.

It localises to the cytoplasmic vesicle. The protein localises to the secretory vesicle. Its subcellular location is the acrosome inner membrane. In terms of biological role, plays a role in acrosome formation and establishment of normal sperm morphology during spermatogenesis. Important for male fertility. This Homo sapiens (Human) protein is Sperm acrosome membrane-associated protein 1 (SPACA1).